Here is a 122-residue protein sequence, read N- to C-terminus: Small ribosomal subunit protein uS13 (122 aa).

A disordered region spans residues 95 to 122 (GLPVRGQRTRTNARTRKGPRKTVAKKKK).

Belongs to the universal ribosomal protein uS13 family. In terms of assembly, part of the 30S ribosomal subunit. Forms a loose heterodimer with protein S19. Forms two bridges to the 50S subunit in the 70S ribosome.

Its function is as follows. Located at the top of the head of the 30S subunit, it contacts several helices of the 16S rRNA. In the 70S ribosome it contacts the 23S rRNA (bridge B1a) and protein L5 of the 50S subunit (bridge B1b), connecting the 2 subunits; these bridges are implicated in subunit movement. Contacts the tRNAs in the A and P-sites. The protein is Small ribosomal subunit protein uS13 of Thermoanaerobacter pseudethanolicus (strain ATCC 33223 / 39E) (Clostridium thermohydrosulfuricum).